We begin with the raw amino-acid sequence, 261 residues long: Aromatic peroxygenase (261 aa).

C36 provides a ligand contact to heme. N100, N137, N141, and N220 each carry an N-linked (GlcNAc...) asparagine glycan.

This sequence belongs to the chloroperoxidase family. Heme b serves as cofactor. Post-translationally, N-glycosylated.

Aromatic peroxidase that oxidizes aryl alcohols into the corresponding aldehydes and then into the corresponding benzoic acids. Catalyzes the regioselective peroxide-dependent hydroxylation of naphthalene to 1-naphthol and to a far lesser extent 2-naphthol via a naphthalene 1,2-oxide intermediate. Halogenates phenol to 2-bromophenol and 4-bromophenol. Oxidizes the sulfur-containing heterocycle dibenzothiophene to yield sulfoxidation products, and trace amounts of ring-hydroxylation products. In Coprinellus radians (Coprophilous mushroom), this protein is Aromatic peroxygenase.